The sequence spans 272 residues: Indole-3-glycerol phosphate synthase (272 aa).

It belongs to the TrpC family.

It catalyses the reaction 1-(2-carboxyphenylamino)-1-deoxy-D-ribulose 5-phosphate + H(+) = (1S,2R)-1-C-(indol-3-yl)glycerol 3-phosphate + CO2 + H2O. It participates in amino-acid biosynthesis; L-tryptophan biosynthesis; L-tryptophan from chorismate: step 4/5. In Mycobacterium sp. (strain JLS), this protein is Indole-3-glycerol phosphate synthase.